The chain runs to 227 residues: Peroxiredoxin-like 2A (227 aa).

A thioredoxin fold region spans residues 13 to 111 (LWSISIGAFG…DQLGVPLYAV (99 aa)). Catalysis depends on redox-active residues cysteine 84 and cysteine 87.

This sequence belongs to the peroxiredoxin-like PRXL2 family. PRXL2A subfamily.

The protein localises to the cytoplasm. In terms of biological role, involved in redox regulation of the cell. Acts as an antioxidant. This Xenopus tropicalis (Western clawed frog) protein is Peroxiredoxin-like 2A (prxl2a).